The primary structure comprises 93 residues: Putative pterin-4-alpha-carbinolamine dehydratase (93 aa).

The protein belongs to the pterin-4-alpha-carbinolamine dehydratase family.

The enzyme catalyses (4aS,6R)-4a-hydroxy-L-erythro-5,6,7,8-tetrahydrobiopterin = (6R)-L-erythro-6,7-dihydrobiopterin + H2O. The polypeptide is Putative pterin-4-alpha-carbinolamine dehydratase (Synechococcus sp. (strain WH7803)).